Consider the following 259-residue polypeptide: Deoxyribose-phosphate aldolase (259 aa).

The active-site Proton donor/acceptor is Asp102. Residue Lys166 is the Schiff-base intermediate with acetaldehyde of the active site. Residue Lys200 is the Proton donor/acceptor of the active site.

The protein belongs to the DeoC/FbaB aldolase family. DeoC type 2 subfamily.

The protein localises to the cytoplasm. It carries out the reaction 2-deoxy-D-ribose 5-phosphate = D-glyceraldehyde 3-phosphate + acetaldehyde. The protein operates within carbohydrate degradation; 2-deoxy-D-ribose 1-phosphate degradation; D-glyceraldehyde 3-phosphate and acetaldehyde from 2-deoxy-alpha-D-ribose 1-phosphate: step 2/2. Functionally, catalyzes a reversible aldol reaction between acetaldehyde and D-glyceraldehyde 3-phosphate to generate 2-deoxy-D-ribose 5-phosphate. This chain is Deoxyribose-phosphate aldolase, found in Vibrio cholerae serotype O1 (strain ATCC 39315 / El Tor Inaba N16961).